The sequence spans 76 residues: Probable 26S proteasome complex subunit dss-1 (76 aa).

2 disordered regions span residues 1-28 (MSST…FEEF) and 52-76 (DDET…HPIA). Composition is skewed to basic and acidic residues over residues 7–20 (TKKD…KKET) and 57–70 (ESEF…ELRK).

Belongs to the DSS1/SEM1 family. In terms of assembly, part of the 26S proteasome.

It localises to the nucleus. It is found in the cytoplasm. Functionally, subunit of the 26S proteasome which plays a role in ubiquitin-dependent proteolysis. Has an essential role in oogenesis and larval growth. Required for intestinal function and default lifespan. The chain is Probable 26S proteasome complex subunit dss-1 from Caenorhabditis briggsae.